Consider the following 440-residue polypeptide: Rhamnogalacturonase A (440 aa).

An N-terminal signal peptide occupies residues 1–18 (MRALFLLALGSIPALVSG). Cysteines 39 and 65 form a disulfide. An N-linked (GlcNAc...) asparagine glycan is attached at asparagine 50. The active-site Proton donor is aspartate 215. An intrachain disulfide couples cysteine 217 to cysteine 234. Histidine 290 is an active-site residue. N-linked (GlcNAc...) asparagine glycosylation is present at asparagine 317. Disulfide bonds link cysteine 340–cysteine 346 and cysteine 368–cysteine 377. Threonine 385 carries O-linked (Man) threonine glycosylation. Serine 386 carries an O-linked (Man) serine glycan. O-linked (Man) threonine glycosylation is found at threonine 388, threonine 389, and threonine 390. O-linked (Man) serine glycosylation is present at serine 391. 2 O-linked (Man) threonine glycosylation sites follow: threonine 392 and threonine 394. O-linked (Man) serine glycans are attached at residues serine 398 and serine 401. O-linked (Man) threonine glycans are attached at residues threonine 403, threonine 404, and threonine 416. A glycan (O-linked (Man) serine) is linked at serine 418. O-linked (Man) threonine glycans are attached at residues threonine 423 and threonine 426. Serine 427 and serine 436 each carry an O-linked (Man) serine glycan.

The protein belongs to the glycosyl hydrolase 28 family. The N-terminus is blocked. In terms of processing, N-glycosylated and may also be O-glycosylated.

The protein localises to the secreted. The catalysed reaction is Endohydrolysis of alpha-D-GalA-(1-&gt;2)-alpha-L-Rha glycosidic bond in the rhamnogalacturonan I backbone with initial inversion of anomeric configuration releasing oligosaccharides with beta-D-GalA at the reducing end.. Pectinolytic enzymes consist of four classes of enzymes: pectine lyase, polygalacturonase, pectin methylesterase and rhamnogalacturonase. Has a positive effect in the apple hot-mash liquefaction process. Hydrolyzes alpha-D-galacturonopyranosyl-(1,2)-alpha-L-rhamnopyranosyl linkages in the backbone of the hairy regions of pectins. The protein is Rhamnogalacturonase A (rhgA) of Aspergillus aculeatus.